The primary structure comprises 302 residues: Succinate--CoA ligase [ADP-forming] subunit alpha (302 aa).

Residues 17–20 (TGST), K43, and 96–98 (ITE) contribute to the CoA site. Residue Y159 coordinates substrate. H247 (tele-phosphohistidine intermediate) is an active-site residue.

This sequence belongs to the succinate/malate CoA ligase alpha subunit family. In terms of assembly, heterotetramer of two alpha and two beta subunits.

It carries out the reaction succinate + ATP + CoA = succinyl-CoA + ADP + phosphate. The catalysed reaction is GTP + succinate + CoA = succinyl-CoA + GDP + phosphate. The protein operates within carbohydrate metabolism; tricarboxylic acid cycle; succinate from succinyl-CoA (ligase route): step 1/1. In terms of biological role, succinyl-CoA synthetase functions in the citric acid cycle (TCA), coupling the hydrolysis of succinyl-CoA to the synthesis of either ATP or GTP and thus represents the only step of substrate-level phosphorylation in the TCA. The alpha subunit of the enzyme binds the substrates coenzyme A and phosphate, while succinate binding and nucleotide specificity is provided by the beta subunit. The protein is Succinate--CoA ligase [ADP-forming] subunit alpha of Staphylococcus epidermidis (strain ATCC 12228 / FDA PCI 1200).